The chain runs to 236 residues: Peptidase E (236 aa).

Active-site charge relay system residues include Ser122, Asp137, and His159.

The protein belongs to the peptidase S51 family.

The protein resides in the cytoplasm. The catalysed reaction is Dipeptidase E catalyzes the hydrolysis of dipeptides Asp-|-Xaa. It does not act on peptides with N-terminal Glu, Asn or Gln, nor does it cleave isoaspartyl peptides.. Hydrolyzes dipeptides containing N-terminal aspartate residues. May play a role in allowing the cell to use peptide aspartate to spare carbon otherwise required for the synthesis of the aspartate family of amino acids. The protein is Peptidase E of Shewanella putrefaciens (strain CN-32 / ATCC BAA-453).